The primary structure comprises 490 residues: ATP synthase subunit beta, chloroplastic (490 aa).

T6 is modified (phosphothreonine). Phosphoserine is present on S13. 172 to 179 (GGAGVGKT) lines the ATP pocket.

The protein belongs to the ATPase alpha/beta chains family. F-type ATPases have 2 components, CF(1) - the catalytic core - and CF(0) - the membrane proton channel. CF(1) has five subunits: alpha(3), beta(3), gamma(1), delta(1), epsilon(1). CF(0) has four main subunits: a(1), b(1), b'(1) and c(9-12).

The protein resides in the plastid. Its subcellular location is the chloroplast thylakoid membrane. It carries out the reaction ATP + H2O + 4 H(+)(in) = ADP + phosphate + 5 H(+)(out). In terms of biological role, produces ATP from ADP in the presence of a proton gradient across the membrane. The catalytic sites are hosted primarily by the beta subunits. This is ATP synthase subunit beta, chloroplastic from Aethionema grandiflorum (Persian stone-cress).